A 337-amino-acid chain; its full sequence is Tetraacyldisaccharide 4'-kinase (337 aa).

52 to 59 provides a ligand contact to ATP; that stretch reads TLGGAGKT.

The protein belongs to the LpxK family.

The catalysed reaction is a lipid A disaccharide + ATP = a lipid IVA + ADP + H(+). The protein operates within glycolipid biosynthesis; lipid IV(A) biosynthesis; lipid IV(A) from (3R)-3-hydroxytetradecanoyl-[acyl-carrier-protein] and UDP-N-acetyl-alpha-D-glucosamine: step 6/6. Its function is as follows. Transfers the gamma-phosphate of ATP to the 4'-position of a tetraacyldisaccharide 1-phosphate intermediate (termed DS-1-P) to form tetraacyldisaccharide 1,4'-bis-phosphate (lipid IVA). This Methylobacterium nodulans (strain LMG 21967 / CNCM I-2342 / ORS 2060) protein is Tetraacyldisaccharide 4'-kinase.